The following is a 469-amino-acid chain: NADH-quinone oxidoreductase subunit N (469 aa).

Helical transmembrane passes span 6–26 (IWIIMPLAILAGASLLILLLG), 37–57 (VGVAACVGAALWALQLQPAAL), 61–81 (LGVAFTPFARFFTVLFSLTAA), 96–116 (ISGEEYPATVIFAAFGMAVVS), 121–141 (LLILFLGLEALTFAFYILVAI), 156–176 (LLLGAISAACIAFGIALLYAA), 197–217 (PIALAGWGLLLIGIAFKISLV), 234–254 (VVAFLSTASKGAAIAFLLLLL), 263–283 (LHTPLWWLSLLSMLVGNLAAL), 291–311 (MLAYSSIAQMGYLVLALLTGS), 315–335 (FAAVILYVVVYTAMNLAAFGA), 362–382 (AGILALALFALAGIPPTAGFI), 397–419 (IPLAIVGILAAAVSAYYYLRVVV), and 441–461 (IALSAAALVILAVGIYPSPLL).

This sequence belongs to the complex I subunit 2 family. In terms of assembly, NDH-1 is composed of 14 different subunits. Subunits NuoA, H, J, K, L, M, N constitute the membrane sector of the complex.

The protein localises to the cell inner membrane. It catalyses the reaction a quinone + NADH + 5 H(+)(in) = a quinol + NAD(+) + 4 H(+)(out). In terms of biological role, NDH-1 shuttles electrons from NADH, via FMN and iron-sulfur (Fe-S) centers, to quinones in the respiratory chain. The immediate electron acceptor for the enzyme in this species is believed to be ubiquinone. Couples the redox reaction to proton translocation (for every two electrons transferred, four hydrogen ions are translocated across the cytoplasmic membrane), and thus conserves the redox energy in a proton gradient. This chain is NADH-quinone oxidoreductase subunit N, found in Geotalea uraniireducens (strain Rf4) (Geobacter uraniireducens).